A 78-amino-acid chain; its full sequence is Acyl carrier protein (78 aa).

The region spanning 2-77 is the Carrier domain; it reads STIEESVKSI…AAIDFIKESK (76 aa). Serine 37 bears the O-(pantetheine 4'-phosphoryl)serine mark.

This sequence belongs to the acyl carrier protein (ACP) family. Post-translationally, 4'-phosphopantetheine is transferred from CoA to a specific serine of apo-ACP by AcpS. This modification is essential for activity because fatty acids are bound in thioester linkage to the sulfhydryl of the prosthetic group.

The protein localises to the cytoplasm. Its pathway is lipid metabolism; fatty acid biosynthesis. In terms of biological role, carrier of the growing fatty acid chain in fatty acid biosynthesis. The protein is Acyl carrier protein of Wigglesworthia glossinidia brevipalpis.